The sequence spans 140 residues: Organic hydroperoxide resistance protein-like (140 aa).

Belongs to the OsmC/Ohr family.

This is Organic hydroperoxide resistance protein-like from Staphylococcus aureus (strain MSSA476).